Here is a 425-residue protein sequence, read N- to C-terminus: COBRA-like protein 4 (425 aa).

The first 27 residues, 1–27, serve as a signal peptide directing secretion; that stretch reads MAIGVGGCCAVLLAAALLFSSPATTYA. 5 N-linked (GlcNAc...) asparagine glycosylation sites follow: Asn-36, Asn-163, Asn-171, Asn-319, and Asn-352.

The protein belongs to the COBRA family.

The sequence is that of COBRA-like protein 4 (BC1L9) from Oryza sativa subsp. japonica (Rice).